A 1005-amino-acid chain; its full sequence is Myosin IE heavy chain (1005 aa).

Residues Glu-8–Glu-693 form the Myosin motor domain. Residue Gly-101–Thr-108 participates in ATP binding. The segment at Ser-539–Ala-562 is disordered. The segment covering Arg-551–Glu-560 has biased composition (basic and acidic residues). Residues Lys-556 to Tyr-630 are actin-binding. 2 IQ domains span residues Leu-694–Ala-722 and Trp-716–Phe-745. Residues Lys-810–Lys-1004 enclose the TH1 domain.

The protein belongs to the TRAFAC class myosin-kinesin ATPase superfamily. Myosin family. Myosin I heavy chain is single-headed. Dimer of a heavy and a light chain. Inability to self-assemble into filaments.

Myosin is a protein that binds to actin and has ATPase activity that is activated by actin. May play a role in moving membranes relative to actin. In Dictyostelium discoideum (Social amoeba), this protein is Myosin IE heavy chain (myoE).